The sequence spans 118 residues: Small ribosomal subunit protein uS13 (118 aa).

A disordered region spans residues 93–118; it reads RGLPVRGQRTKTNARTRKGPRKPIRK.

This sequence belongs to the universal ribosomal protein uS13 family. In terms of assembly, part of the 30S ribosomal subunit. Forms a loose heterodimer with protein S19. Forms two bridges to the 50S subunit in the 70S ribosome.

Located at the top of the head of the 30S subunit, it contacts several helices of the 16S rRNA. In the 70S ribosome it contacts the 23S rRNA (bridge B1a) and protein L5 of the 50S subunit (bridge B1b), connecting the 2 subunits; these bridges are implicated in subunit movement. Contacts the tRNAs in the A and P-sites. The polypeptide is Small ribosomal subunit protein uS13 (Pseudomonas fluorescens (strain ATCC BAA-477 / NRRL B-23932 / Pf-5)).